A 242-amino-acid polypeptide reads, in one-letter code: Large ribosomal subunit protein uL3 (242 aa).

The disordered stretch occupies residues 131-165; it reads GRATHGNSVSHRTHGSTGQRQDPGKVFKGKKMAGH. Over residues 135-150 the composition is skewed to polar residues; it reads HGNSVSHRTHGSTGQR. Q151 is modified (N5-methylglutamine).

It belongs to the universal ribosomal protein uL3 family. As to quaternary structure, part of the 50S ribosomal subunit. Forms a cluster with proteins L14 and L19. Post-translationally, methylated by PrmB.

Functionally, one of the primary rRNA binding proteins, it binds directly near the 3'-end of the 23S rRNA, where it nucleates assembly of the 50S subunit. The sequence is that of Large ribosomal subunit protein uL3 from Chelativorans sp. (strain BNC1).